The sequence spans 408 residues: Putative ankyrin repeat protein L483 (408 aa).

ANK repeat units follow at residues 78–107 (SLNKCLIKSCKKNKLNIIKYLVSLGADIKA), 108–137 (GDDCAVQLASQNGHLEVIEYLVAQGANIRA), 139–167 (NDYAVIWASRNGYLDIVKYLVSQGADIRA), 168–197 (NNDYAVRWASRNGHLKVVKYLVSLGANIRT), 198–227 (ENDYAIKYASENGYLRIVEYLVSQGADIRA), 229–257 (NDYAVGLASSNGHFEVVEYLVSQGANIRV), 259–287 (NDYAVRLASSNGHLEVVKYLVSLRANIRA), 288–317 (RCDFAIKWSSSNGHLEVVKYLVSQGADIRS), 318–347 (QNDYAVRYASTNGHLEVVKYLVGQGADIRT), 349–377 (DDYAVRWASRGGCLEVVKYLVDQGANIRA), and 378–407 (KDDYAVKWASEKGHLEIVKFLISQGAVLTK).

This chain is Putative ankyrin repeat protein L483, found in Acanthamoeba polyphaga (Amoeba).